The chain runs to 224 residues: Toxin coregulated pilin (224 aa).

A propeptide spans 1–25 (atypical leader sequence); that stretch reads MQLLKQLFKKKFVKEEHDKKTGQEG. M26 is subject to N-methylmethionine. Residues 26 to 46 traverse the membrane as a helical segment; that stretch reads MTLLEVIIVLGIMGVVSAGVV. Residues C145 and C211 are joined by a disulfide bond.

Its subcellular location is the fimbrium. It is found in the membrane. Functionally, major component of the toxin co-regulated pilus (tcp) which is a type IV pilus essential for bacterial aggregation and subsequent colonization in the host small intestine. The protein is Toxin coregulated pilin (tcpA) of Vibrio cholerae.